Here is a 95-residue protein sequence, read N- to C-terminus: Probable FAD-linked sulfhydryl oxidase OPG072 (95 aa).

Residues 1 to 8 (MNPKHWGR) lie on the Intravirion side of the membrane. Positions 1–95 (MNPKHWGRAV…AIDVSKVKPL (95 aa)) constitute an ERV/ALR sulfhydryl oxidase domain. A helical membrane pass occupies residues 9 to 25 (AVWTIIFIVLSQAGLDG). The Virion surface portion of the chain corresponds to 26-95 (NIEACKRKLY…AIDVSKVKPL (70 aa)). Cys-43 and Cys-46 form a disulfide bridge.

This sequence belongs to the orthopoxvirus OPG072 family. Interacts with OPG128; this interaction involves formation of a transient disulfide-bonded intermediate, allowing disulfide bond transfer. It depends on FAD as a cofactor.

The protein localises to the virion membrane. Its subcellular location is the host cytoplasm. It carries out the reaction 2 R'C(R)SH + O2 = R'C(R)S-S(R)CR' + H2O2. Its function is as follows. FAD-dependent sulfhydryl oxidase that catalyzes disulfide bond formation. The complete pathway for formation of disulfide bonds in intracellular virion membrane proteins sequentially involves thiol-disulfide transfer between OPG072, OPG128 and OPG088. This is Probable FAD-linked sulfhydryl oxidase OPG072 (OPG072) from Vaccinia virus (strain Copenhagen) (VACV).